The chain runs to 546 residues: Type II methyltransferase M.XhoI (546 aa).

The protein belongs to the N(4)/N(6)-methyltransferase family.

The enzyme catalyses a 2'-deoxyadenosine in DNA + S-adenosyl-L-methionine = an N(6)-methyl-2'-deoxyadenosine in DNA + S-adenosyl-L-homocysteine + H(+). In terms of biological role, a gamma subtype methylase, recognizes the double-stranded sequence 5'-CTCGAG-3', methylates A-5 on both strands, and protects the DNA from cleavage by the XhoI endonuclease. This chain is Type II methyltransferase M.XhoI, found in Xanthomonas vasicola.